The chain runs to 341 residues: Putative UPF0607 protein FLJ37424 (341 aa).

Disordered stretches follow at residues P72–P131 and G216–L283. The segment covering E79 to R101 has biased composition (basic and acidic residues). The span at E108 to Y127 shows a compositional bias: polar residues. Over residues A243–L252 the composition is skewed to basic residues.

This sequence belongs to the UPF0607 family.

The polypeptide is Putative UPF0607 protein FLJ37424 (Homo sapiens (Human)).